The following is a 942-amino-acid chain: Glutamyl aminopeptidase (942 aa).

Residues 1 to 14 (MSTDSKRYCIKTKH) lie on the Cytoplasmic side of the membrane. The chain crosses the membrane as a helical; Signal-anchor for type II membrane protein span at residues 15 to 35 (VAIICAAVVAVGLIVGLSVGL). Residues 36 to 942 (TRSCDSKDGG…RDTIRDWFFN (907 aa)) lie on the Extracellular side of the membrane. The segment at 40–74 (DSKDGGQGTTQSPSHLPPTSSPPQDQGVCPASEDE) is disordered. N-linked (GlcNAc...) asparagine glycans are attached at residues asparagine 110, asparagine 114, and asparagine 187. Glutamate 213 provides a ligand contact to substrate. Residue asparagine 314 is glycosylated (N-linked (GlcNAc...) asparagine). Substrate is bound at residue 347–351 (GAMEN). Asparagine 367 is a glycosylation site (N-linked (GlcNAc...) asparagine). Histidine 383 contacts Zn(2+). Residue glutamate 384 is the Proton acceptor of the active site. The Zn(2+) site is built by histidine 387 and glutamate 406. 9 N-linked (GlcNAc...) asparagine glycosylation sites follow: asparagine 557, asparagine 579, asparagine 587, asparagine 597, asparagine 632, asparagine 668, asparagine 753, asparagine 786, and asparagine 791. Arginine 877 provides a ligand contact to substrate.

The protein belongs to the peptidase M1 family. As to quaternary structure, homodimer; disulfide-linked. Zn(2+) serves as cofactor.

It is found in the cell membrane. It catalyses the reaction Release of N-terminal glutamate (and to a lesser extent aspartate) from a peptide.. Its activity is regulated as follows. Substrate specificity is modulated by calcium which enhances the enzymatic activity for cleavage of acidic residues while reducing its activity with basic residues. Inhibited by aminopeptidase inhibitors amastatin and bestatin. Its function is as follows. Regulates central hypertension through its calcium-modulated preference to cleave N-terminal acidic residues from peptides such as angiotensin II. This is Glutamyl aminopeptidase (ENPEP) from Sus scrofa (Pig).